We begin with the raw amino-acid sequence, 680 residues long: Probable ATP-dependent RNA helicase pitchoune (680 aa).

The tract at residues 1-168 is disordered; that stretch reads MSIREKLLMK…GKPAKDDEPF (168 aa). Over residues 29-42 the composition is skewed to polar residues; it reads KNAQKQEPPKQNGN. Acidic residues predominate over residues 59 to 69; the sequence is DEDDDLEEDFQ. Residues 74 to 83 show a composition bias toward basic residues; the sequence is PKKKQQKQPP. Residues 95 to 141 are compositionally biased toward acidic residues; that stretch reads SESDDDEQEDEADEDSDLDEVAEVDEEDVDSGSEDDDQQEDEDEEEP. A Q motif motif is present at residues 187-215; that stretch reads FASLKGAVSEATLRAIKEMGFTEMTEIQS. Positions 218–393 constitute a Helicase ATP-binding domain; sequence LTPLLKGRDL…KLALKSEPIY (176 aa). An ATP-binding site is contributed by 231–238; the sequence is AQTGSGKT. The short motif at 341-344 is the DEVD box element; the sequence is DEVD. Residues 407–577 enclose the Helicase C-terminal domain; sequence GLEQGYIVCP…DIQLQLEKLI (171 aa). Residues 659–680 are disordered; that stretch reads GSASKQRHFKQVNRDQAKKFMR. Residues 670 to 680 are compositionally biased toward basic and acidic residues; it reads VNRDQAKKFMR.

It belongs to the DEAD box helicase family. DDX18/HAS1 subfamily.

The protein localises to the nucleus. It is found in the nucleolus. The catalysed reaction is ATP + H2O = ADP + phosphate + H(+). In terms of biological role, probable RNA-dependent helicase. Functions in cell growth and proliferation. May have a role in ribosome biogenesis and, consequently, in protein biosynthesis. In Drosophila melanogaster (Fruit fly), this protein is Probable ATP-dependent RNA helicase pitchoune (pit).